We begin with the raw amino-acid sequence, 141 residues long: MEKVIKQIVTINLEAGKANPAKVGKDLAPTGINLLGFCNQYNEMTKLQLGLVVPAKITIYEDRSFNVKLKTPPAAFLLKKYAGVEKGAAQPGKEVVGSITTQQLRTIAEIKLPDLNTTSIDRAMKIIAGTARNMGINIEDD.

Belongs to the universal ribosomal protein uL11 family. In terms of assembly, part of the ribosomal stalk of the 50S ribosomal subunit. Interacts with L10 and the large rRNA to form the base of the stalk. L10 forms an elongated spine to which L12 dimers bind in a sequential fashion forming a multimeric L10(L12)X complex. Post-translationally, one or more lysine residues are methylated.

In terms of biological role, forms part of the ribosomal stalk which helps the ribosome interact with GTP-bound translation factors. This is Large ribosomal subunit protein uL11B from Halalkalibacterium halodurans (strain ATCC BAA-125 / DSM 18197 / FERM 7344 / JCM 9153 / C-125) (Bacillus halodurans).